The primary structure comprises 290 residues: 33 kDa chaperonin (290 aa).

2 cysteine pairs are disulfide-bonded: Cys235–Cys237 and Cys268–Cys271.

This sequence belongs to the HSP33 family. In terms of processing, under oxidizing conditions two disulfide bonds are formed involving the reactive cysteines. Under reducing conditions zinc is bound to the reactive cysteines and the protein is inactive.

The protein localises to the cytoplasm. Functionally, redox regulated molecular chaperone. Protects both thermally unfolding and oxidatively damaged proteins from irreversible aggregation. Plays an important role in the bacterial defense system toward oxidative stress. In Streptococcus pneumoniae serotype 19F (strain G54), this protein is 33 kDa chaperonin.